We begin with the raw amino-acid sequence, 286 residues long: Bifunctional protein FolD (286 aa).

NADP(+) contacts are provided by residues 166–168 and Ile232; that span reads GAS.

The protein belongs to the tetrahydrofolate dehydrogenase/cyclohydrolase family. In terms of assembly, homodimer.

The catalysed reaction is (6R)-5,10-methylene-5,6,7,8-tetrahydrofolate + NADP(+) = (6R)-5,10-methenyltetrahydrofolate + NADPH. It carries out the reaction (6R)-5,10-methenyltetrahydrofolate + H2O = (6R)-10-formyltetrahydrofolate + H(+). Its pathway is one-carbon metabolism; tetrahydrofolate interconversion. Its function is as follows. Catalyzes the oxidation of 5,10-methylenetetrahydrofolate to 5,10-methenyltetrahydrofolate and then the hydrolysis of 5,10-methenyltetrahydrofolate to 10-formyltetrahydrofolate. This is Bifunctional protein FolD from Vibrio campbellii (strain ATCC BAA-1116).